Reading from the N-terminus, the 66-residue chain is Large ribosomal subunit protein bL33c (66 aa).

It belongs to the bacterial ribosomal protein bL33 family.

The protein resides in the plastid. It is found in the chloroplast. The chain is Large ribosomal subunit protein bL33c from Jasminum nudiflorum (Winter jasmine).